The sequence spans 105 residues: Heat shock protein HspQ (105 aa).

Belongs to the HspQ family.

The protein resides in the cytoplasm. Its function is as follows. Involved in the degradation of certain denaturated proteins, including DnaA, during heat shock stress. This is Heat shock protein HspQ from Blochmanniella pennsylvanica (strain BPEN).